Consider the following 900-residue polypeptide: Protein translocase subunit SecA (900 aa).

Residues Gln87, Gly105–Thr109, and Asp512 each bind ATP. Residues Gln842–Ala852 show a composition bias toward basic and acidic residues. The segment at Gln842–Lys900 is disordered. Residues Cys883, Cys885, Cys894, and His895 each contribute to the Zn(2+) site. Over residues Lys889–Lys900 the composition is skewed to basic residues.

It belongs to the SecA family. As to quaternary structure, monomer and homodimer. Part of the essential Sec protein translocation apparatus which comprises SecA, SecYEG and auxiliary proteins SecDF-YajC and YidC. It depends on Zn(2+) as a cofactor.

It localises to the cell inner membrane. It is found in the cytoplasm. It carries out the reaction ATP + H2O + cellular proteinSide 1 = ADP + phosphate + cellular proteinSide 2.. Functionally, part of the Sec protein translocase complex. Interacts with the SecYEG preprotein conducting channel. Has a central role in coupling the hydrolysis of ATP to the transfer of proteins into and across the cell membrane, serving both as a receptor for the preprotein-SecB complex and as an ATP-driven molecular motor driving the stepwise translocation of polypeptide chains across the membrane. The chain is Protein translocase subunit SecA from Pectobacterium carotovorum subsp. carotovorum (strain PC1).